A 125-amino-acid chain; its full sequence is Glycine cleavage system H protein (125 aa).

A Lipoyl-binding domain is found at 19–101 (GAVVGITDFA…NGSGWFFKLT (83 aa)). At Lys60 the chain carries N6-lipoyllysine.

This sequence belongs to the GcvH family. The glycine cleavage system is composed of four proteins: P, T, L and H. Requires (R)-lipoate as cofactor.

Its function is as follows. The glycine cleavage system catalyzes the degradation of glycine. The H protein shuttles the methylamine group of glycine from the P protein to the T protein. The polypeptide is Glycine cleavage system H protein (Methylocella silvestris (strain DSM 15510 / CIP 108128 / LMG 27833 / NCIMB 13906 / BL2)).